Consider the following 311-residue polypeptide: Ribosomal RNA small subunit methyltransferase H (311 aa).

S-adenosyl-L-methionine contacts are provided by residues 33–35 (AGH), Asp-53, Phe-80, Asp-101, and Gln-108.

This sequence belongs to the methyltransferase superfamily. RsmH family.

The protein resides in the cytoplasm. It catalyses the reaction cytidine(1402) in 16S rRNA + S-adenosyl-L-methionine = N(4)-methylcytidine(1402) in 16S rRNA + S-adenosyl-L-homocysteine + H(+). In terms of biological role, specifically methylates the N4 position of cytidine in position 1402 (C1402) of 16S rRNA. This chain is Ribosomal RNA small subunit methyltransferase H, found in Clostridioides difficile (strain 630) (Peptoclostridium difficile).